The primary structure comprises 338 residues: Glyceraldehyde-3-phosphate dehydrogenase 2 (338 aa).

NAD(+) is bound by residues 11–12, Asp33, and Arg78; that span reads RI. D-glyceraldehyde 3-phosphate contacts are provided by residues 149 to 151, Thr180, 209 to 210, and Arg232; these read SCT and TG. The active-site Nucleophile is Cys150. Asn314 contacts NAD(+).

Belongs to the glyceraldehyde-3-phosphate dehydrogenase family. Homotetramer.

The protein resides in the cytoplasm. It catalyses the reaction D-glyceraldehyde 3-phosphate + phosphate + NAD(+) = (2R)-3-phospho-glyceroyl phosphate + NADH + H(+). It participates in carbohydrate degradation; glycolysis; pyruvate from D-glyceraldehyde 3-phosphate: step 1/5. The sequence is that of Glyceraldehyde-3-phosphate dehydrogenase 2 (gpd2) from Agaricus bisporus (White button mushroom).